The following is a 300-amino-acid chain: Large ribosomal subunit protein uL18 (300 aa).

Positions 246–267 are enriched in basic and acidic residues; the sequence is NIRSDPKRDRKPKKDVSKEPKR. Residues 246–276 are disordered; the sequence is NIRSDPKRDRKPKKDVSKEPKRWNAKKLTNA.

Belongs to the universal ribosomal protein uL18 family. As to quaternary structure, component of the large ribosomal subunit (LSU).

The protein resides in the cytoplasm. Its subcellular location is the nucleus. In terms of biological role, component of the ribosome, a large ribonucleoprotein complex responsible for the synthesis of proteins in the cell. The small ribosomal subunit (SSU) binds messenger RNAs (mRNAs) and translates the encoded message by selecting cognate aminoacyl-transfer RNA (tRNA) molecules. The large subunit (LSU) contains the ribosomal catalytic site termed the peptidyl transferase center (PTC), which catalyzes the formation of peptide bonds, thereby polymerizing the amino acids delivered by tRNAs into a polypeptide chain. The nascent polypeptides leave the ribosome through a tunnel in the LSU and interact with protein factors that function in enzymatic processing, targeting, and the membrane insertion of nascent chains at the exit of the ribosomal tunnel. The polypeptide is Large ribosomal subunit protein uL18 (RpL5) (Toxoptera citricida (Brown citrus aphid)).